Consider the following 378-residue polypeptide: MRGKRVVLPDKDHQACGLFGVIDRSGRRFSGEMAINAMINMKVRGNGLGGGFAAYGIYPEYKDYYALHVMFQDWDMEAKHRVDEFLDANFDVVYAEEIPVNPEANVASPPLFWRYFVSPNKKGDEKKLSDDDYVVKKVMEINTKINNAYVVSSGKDMGVFKGVGFPEDIAEYFMLAEEYKGYMWTAHSRFPTNTPGWWGGAHPFCILDWTVVHNGEISSYGTNKRYLEMFGYYCTLLTDTEVMAYAVDLLMRKQGLPIEIVSKIFAPPMWDHIDIMDEKKKKFYTALRMNYGPLLINGPWTIVVARHGEMFGITDRIRLRPITSGEKGDLLFVSSEESAIRAVCPDLDRVYTPMGGEPVIGRLKSREKELAKQLSEVE.

Cysteine 16 serves as the catalytic For GATase activity. Residues 16–378 (CGLFGVIDRS…ELAKQLSEVE (363 aa)) form the Glutamine amidotransferase type-2 domain.

This is an uncharacterized protein from Archaeoglobus fulgidus (strain ATCC 49558 / DSM 4304 / JCM 9628 / NBRC 100126 / VC-16).